The following is a 692-amino-acid chain: Elongation factor G 2 (692 aa).

The tr-type G domain occupies 8–283 (EKTRNIGIMA…SVVAYLPSPL (276 aa)). Residues 17–24 (AHIDAGKT), 81–85 (DTPGH), and 135–138 (NKMD) each bind GTP.

Belongs to the TRAFAC class translation factor GTPase superfamily. Classic translation factor GTPase family. EF-G/EF-2 subfamily.

The protein resides in the cytoplasm. Catalyzes the GTP-dependent ribosomal translocation step during translation elongation. During this step, the ribosome changes from the pre-translocational (PRE) to the post-translocational (POST) state as the newly formed A-site-bound peptidyl-tRNA and P-site-bound deacylated tRNA move to the P and E sites, respectively. Catalyzes the coordinated movement of the two tRNA molecules, the mRNA and conformational changes in the ribosome. This chain is Elongation factor G 2, found in Geobacter sulfurreducens (strain ATCC 51573 / DSM 12127 / PCA).